The chain runs to 453 residues: Homogentisate 1,2-dioxygenase (453 aa).

Basic and acidic residues predominate over residues 1-12; sequence MLEKAERQRKAA. A disordered region spans residues 1-43; that stretch reads MLEKAERQRKAAPDQQRSAGYMPGFGNDFETESLPGSLPQGQN. The Proton acceptor role is filled by His-306. His-349 and Glu-355 together coordinate Fe cation. Positions 364 and 385 each coordinate homogentisate. His-385 serves as a coordination point for Fe cation.

The protein belongs to the homogentisate dioxygenase family. As to quaternary structure, hexamer; dimer of trimers. The cofactor is Fe cation.

The enzyme catalyses homogentisate + O2 = 4-maleylacetoacetate + H(+). The protein operates within amino-acid degradation; L-phenylalanine degradation; acetoacetate and fumarate from L-phenylalanine: step 4/6. Involved in the catabolism of homogentisate (2,5-dihydroxyphenylacetate or 2,5-OH-PhAc), a central intermediate in the degradation of phenylalanine and tyrosine. Catalyzes the oxidative ring cleavage of the aromatic ring of homogentisate to yield maleylacetoacetate. In Sinorhizobium medicae (strain WSM419) (Ensifer medicae), this protein is Homogentisate 1,2-dioxygenase.